The following is a 335-amino-acid chain: Holliday junction branch migration complex subunit RuvB (335 aa).

Positions 2–184 (ADERIVSAEN…FGIVEHMAYY (183 aa)) are large ATPase domain (RuvB-L). ATP contacts are provided by residues Leu23, Arg24, Gly65, Lys68, Thr69, Thr70, 131 to 133 (EDF), Arg174, Tyr184, and Arg221. Residue Thr69 coordinates Mg(2+). Residues 185–255 (TEADLMDIVQ…IADHALSQLQ (71 aa)) are small ATPAse domain (RuvB-S). Residues 258–335 (IRGLDGVDRK…AHLGMPYPEK (78 aa)) form a head domain (RuvB-H) region. The DNA site is built by Arg313 and Arg318.

This sequence belongs to the RuvB family. In terms of assembly, homohexamer. Forms an RuvA(8)-RuvB(12)-Holliday junction (HJ) complex. HJ DNA is sandwiched between 2 RuvA tetramers; dsDNA enters through RuvA and exits via RuvB. An RuvB hexamer assembles on each DNA strand where it exits the tetramer. Each RuvB hexamer is contacted by two RuvA subunits (via domain III) on 2 adjacent RuvB subunits; this complex drives branch migration. In the full resolvosome a probable DNA-RuvA(4)-RuvB(12)-RuvC(2) complex forms which resolves the HJ.

Its subcellular location is the cytoplasm. The catalysed reaction is ATP + H2O = ADP + phosphate + H(+). Its function is as follows. The RuvA-RuvB-RuvC complex processes Holliday junction (HJ) DNA during genetic recombination and DNA repair, while the RuvA-RuvB complex plays an important role in the rescue of blocked DNA replication forks via replication fork reversal (RFR). RuvA specifically binds to HJ cruciform DNA, conferring on it an open structure. The RuvB hexamer acts as an ATP-dependent pump, pulling dsDNA into and through the RuvAB complex. RuvB forms 2 homohexamers on either side of HJ DNA bound by 1 or 2 RuvA tetramers; 4 subunits per hexamer contact DNA at a time. Coordinated motions by a converter formed by DNA-disengaged RuvB subunits stimulates ATP hydrolysis and nucleotide exchange. Immobilization of the converter enables RuvB to convert the ATP-contained energy into a lever motion, pulling 2 nucleotides of DNA out of the RuvA tetramer per ATP hydrolyzed, thus driving DNA branch migration. The RuvB motors rotate together with the DNA substrate, which together with the progressing nucleotide cycle form the mechanistic basis for DNA recombination by continuous HJ branch migration. Branch migration allows RuvC to scan DNA until it finds its consensus sequence, where it cleaves and resolves cruciform DNA. In Latilactobacillus sakei subsp. sakei (strain 23K) (Lactobacillus sakei subsp. sakei), this protein is Holliday junction branch migration complex subunit RuvB.